We begin with the raw amino-acid sequence, 207 residues long: MQFTKIDINNWTRKEYFDHYFGNTPCTYSMTVKLDISKLKKDGKKLYPTLLYGVTTIINRHEEFRTALDENGQVGVFSEMLPCYTVFHKETETFSSIWTEFTADYTEFLQNYQKDIDAFGERMGMSAKPNPPENTFPVSMIPWTSFEGFNLNLKKGYDYLLPIFTFGKYYEEGGKYYIPLSIQVHHAVCDGFHVCRFLDELQDLLNK.

The active-site Proton acceptor is the histidine 186.

This sequence belongs to the chloramphenicol acetyltransferase family. As to quaternary structure, homotrimer.

It catalyses the reaction chloramphenicol + acetyl-CoA = chloramphenicol 3-acetate + CoA. In terms of biological role, this enzyme is an effector of chloramphenicol resistance in bacteria. This Campylobacter coli protein is Chloramphenicol acetyltransferase.